The sequence spans 480 residues: MLLKNAVQLICYPDRIGNNLKDLYTVVDTHLSEAIGGLHILPFFPSNADGGFSPLTHKEVDPKVGTWDDIEAFTAKYDLCVDLTVNHISDESPEFTDFIANGFDSEYADLFVHVDKFGEISPDDMAKIHIRKEKEPFREVTLSDGTKTRVWCTFTEQQIDLNYESDLAYQLMESYIGFLTSKGVNLLRLDAFGYTTKRIGTSCFLVEPEVYQILDWVNQVALKHGAECLPEVHDHTSYQYAISRRNMHPYGFALPPLLLYSLLDANSTYLKNWLRMCPRNMVTVLDTHDGICIPDVEGVLPDEKIKVLIDNIDARSADPIMRRSAANIHSVGAIYQLTCTFYDALMQNDDAYIAARAIQFFTPGIPQVYYVGLLAGCNDHELMEQSGELRDINRHYYTLEEVEQDIQKPVVQRLLSLMKFRSNYPAFDGHFELNYSNNSSVAMAWRHGDYYCHLFVDLNFKTVKVTYTDVETGETRHLEC.

The Nucleophile role is filled by Asp-190. A substrate-binding site is contributed by Tyr-194. The Proton donor role is filled by Glu-231. Gln-336 is a substrate binding site.

Belongs to the glycosyl hydrolase 13 family. Sucrose phosphorylase subfamily.

It carries out the reaction 2-O-(alpha-D-glucopyranosyl)glycerol + phosphate = alpha-D-glucose 1-phosphate + glycerol. Functionally, catalyzes the reversible phosphorolysis of 2-O-alpha-D-glucosylglycerol with retention of the anomeric configuration, forming alpha-D-glucose 1-phosphate and glycerol. Has most likely a catabolic role, either regulating the intracellular levels of glucosylglycerol, which acts as a compatible solute, or degrading it when the environmental conditions change. Cannot catalyze the phosphorolysis of sucrose or glucosylglycerate. In Marinobacter adhaerens (strain DSM 23420 / HP15), this protein is Glucosylglycerol phosphorylase.